The following is a 274-amino-acid chain: Putative hydro-lyase Veis_4744 (274 aa).

This sequence belongs to the D-glutamate cyclase family.

This Verminephrobacter eiseniae (strain EF01-2) protein is Putative hydro-lyase Veis_4744.